A 644-amino-acid polypeptide reads, in one-letter code: Fidgetin-like protein 2 (644 aa).

Disordered stretches follow at residues 1-36 and 285-323; these read MHWT…ELPP and AADG…GGGG. Over residues 10–27 the composition is skewed to polar residues; it reads PLNQWPEQHLDVSSTTPS. The span at 285 to 294 shows a compositional bias: low complexity; that stretch reads AADGASYPAA. Residues alanine 390 and 430–435 each bind ATP; that span reads GCGKAL.

The protein belongs to the AAA ATPase family. Mg(2+) is required as a cofactor.

It localises to the cytoplasm. The protein resides in the cell cortex. It carries out the reaction ATP + H2O = ADP + phosphate + H(+). In terms of biological role, microtubule-severing enzyme that negatively regulates cell migration and wound healing. In migrating cells, targets dynamic microtubules (MTs) at the leading edge and severs them, thereby suppressing motility. Microtubule severing releases ARHGEF2 which activates RHOA, which in turn regulates focal ahesion turnover via focal adhesion kinase, as opposed to F-actin polymerization, to suppress cell motility. Negative regulator of axon regeneration that suppresses axonal growth by selectively severing dynamic MTs in the distal axon shaft and growth cone. Contributes to proper cell branching during endothelial and neuronal development. This is Fidgetin-like protein 2 (Fignl2) from Mus musculus (Mouse).